A 522-amino-acid polypeptide reads, in one-letter code: Protein disulfide-isomerase (522 aa).

A signal peptide (or 22) is located at residues 1-28 (MKFSAGAVLSWSSLLLASSVFAQQEAVA). Residues 29–141 (PEDSAVVKLA…VQFMIKQSQP (113 aa)) enclose the Thioredoxin 1 domain. Active-site nucleophile residues include cysteine 61 and cysteine 64. The cysteines at positions 61 and 64 are disulfide-linked. Asparagine 82, asparagine 117, asparagine 155, and asparagine 174 each carry an N-linked (GlcNAc...) asparagine glycan. In terms of domain architecture, Thioredoxin 2 spans 356–485 (FLKGDASPIV…LFDFIKENGH (130 aa)). Residues cysteine 406 and cysteine 409 each act as nucleophile in the active site. A disulfide bridge links cysteine 406 with cysteine 409. Asparagine 425 carries N-linked (GlcNAc...) asparagine glycosylation. The interval 497–522 (AQEKAAEEADADAELADEEDAIHDEL) is disordered. Over residues 504–522 (EADADAELADEEDAIHDEL) the composition is skewed to acidic residues. Positions 519 to 522 (HDEL) match the Prevents secretion from ER motif.

Belongs to the protein disulfide isomerase family. Interacts with EPS1, KAR2 and MNL1. The N-terminus is blocked.

It is found in the endoplasmic reticulum lumen. It catalyses the reaction Catalyzes the rearrangement of -S-S- bonds in proteins.. Functionally, protein disulfide isomerase of ER lumen required for formation of disulfide bonds in secretory and cell-surface proteins and which unscrambles non-native disulfide bonds. Forms a complex with MNL1 to process unfolded protein-bound Man8GlcNAc2 oligosaccharides to Man7GlcNAc2, promoting degradation in unfolded protein response. This Saccharomyces cerevisiae (strain ATCC 204508 / S288c) (Baker's yeast) protein is Protein disulfide-isomerase (PDI1).